The sequence spans 245 residues: tRNA (guanine-N(1)-)-methyltransferase (245 aa).

Residues G112 and 132–137 (IGDFVL) each bind S-adenosyl-L-methionine.

This sequence belongs to the RNA methyltransferase TrmD family. As to quaternary structure, homodimer.

The protein localises to the cytoplasm. It carries out the reaction guanosine(37) in tRNA + S-adenosyl-L-methionine = N(1)-methylguanosine(37) in tRNA + S-adenosyl-L-homocysteine + H(+). Specifically methylates guanosine-37 in various tRNAs. The polypeptide is tRNA (guanine-N(1)-)-methyltransferase (Geobacter sulfurreducens (strain ATCC 51573 / DSM 12127 / PCA)).